The chain runs to 710 residues: Chloride channel protein CLC-e (710 aa).

A run of 12 helical transmembrane segments spans residues 74–94, 122–142, 164–184, 193–213, 222–242, 261–281, 296–316, 340–360, 379–399, 412–432, 451–471, and 472–492; these read ELAI…VVLF, IGSN…VVSI, VKAV…LGTG, SVEI…KSPQ, GSAA…FFAV, TTSM…IGLG, PGEL…SLAL, VFPV…PEVL, GLSA…TAWC, SLFI…LALA, GLVG…TAVL, and LLFE…AVGM. A disordered region spans residues 500-534; it reads QSKRQETRETKETRKRKSQEAVQSLTSSDDESSTN. A compositionally biased stretch (basic and acidic residues) spans 502 to 511; that stretch reads KRQETRETKE. The span at 520-534 shows a compositional bias: polar residues; the sequence is AVQSLTSSDDESSTN. 2 CBS domains span residues 565-624 and 640-702; these read MRTR…GNNR and KCKV…ATRM. Residues 667–687 traverse the membrane as a helical segment; that stretch reads HVAVVSGSIDAPRIHPVGVLD.

This sequence belongs to the chloride channel (TC 2.A.49) family. In terms of assembly, homodimer.

The protein resides in the membrane. It catalyses the reaction 2 chloride(in) + H(+)(out) = 2 chloride(out) + H(+)(in). Its function is as follows. Voltage-gated thylakoid chloride (Cl) channel/transporter involved in chloride homeostasis after transition from light to dark. Influences chloroplast ultrastructure and subsequent photosynthetic electron transport. During photosynthetic response on transition from dark to low light, involved in a sequential mechanism of adaptation; VCCN1 and CLCe first trigger the activation of photoprotection, which is later down-regulated by KEA3 to a low steady state, while adjusting electron transport. Regulates photosynthesis by a pH-independent mechanism likely involving Cl(-) homeostasis. This chain is Chloride channel protein CLC-e, found in Arabidopsis thaliana (Mouse-ear cress).